Here is a 31-residue protein sequence, read N- to C-terminus: leu operon leader peptide (31 aa).

Involved in control of the biosynthesis of leucine. The protein is leu operon leader peptide (leuL) of Buchnera aphidicola subsp. Rhopalosiphum padi.